We begin with the raw amino-acid sequence, 624 residues long: Ceramide transfer protein (624 aa).

The span at 1–11 shows a compositional bias: polar residues; the sequence is MSDNQSWNSSG. The disordered stretch occupies residues 1–24; that stretch reads MSDNQSWNSSGSEEDPETESGPPV. Residues 23-117 form the PH domain; it reads PVERCGVLSK…WVDAIEQHKT (95 aa). S126, S132, and S135 each carry phosphoserine. Residues 202 to 221 are disordered; that stretch reads DDEDDFPTTRSDGDFLHNTN. Residues 263-303 are a coiled coil; the sequence is IELMVKREESWQKRHDREVEKRRRVEEAYKNVMEELKKKPR. S315 is modified (phosphoserine). An FFAT motif is present at residues 321 to 327; the sequence is EFFDAVE. The residue at position 372 (Y372) is a Phosphotyrosine. 3 positions are modified to phosphoserine: S373, S377, and S380. Residues 389-618 enclose the START domain; it reads DVHRFSSQVE…FTSYVQEKTA (230 aa). Residues E472, Q493, N530, and Y579 each contribute to the an N-acylsphing-4-enine site.

In terms of assembly, interacts with VAPA and VAPB. Interaction with VAPB is less efficient than with VAPA. Interacts (via FFAT motif) with MOSPD2 (via MSP domain). Phosphorylation on Ser-132 decreases the affinity toward phosphatidylinositol 4-phosphate at Golgi membranes and reduces ceramide transfer activity. Inactivated by hyperphosphorylation of serine residues by CSNK1G2/CK1 that triggers dissociation from the Golgi complex, thus down-regulating ER-to-Golgi transport of ceramide and sphingomyelin synthesis.

The protein localises to the cytoplasm. It localises to the golgi apparatus. The protein resides in the endoplasmic reticulum. The enzyme catalyses N-hexadecanoylsphing-4-enine(in) = N-hexadecanoylsphing-4-enine(out). In terms of biological role, shelters ceramides and diacylglycerol lipids inside its START domain and mediates the intracellular trafficking of ceramides and diacylglycerol lipids in a non-vesicular manner. The protein is Ceramide transfer protein (Cert1) of Mus musculus (Mouse).